The sequence spans 254 residues: Triosephosphate isomerase (254 aa).

Position 9–11 (9–11 (NWK)) interacts with substrate. The active-site Electrophile is the H96. Catalysis depends on E169, which acts as the Proton acceptor. Residues G175, S215, and 236–237 (GG) each bind substrate.

The protein belongs to the triosephosphate isomerase family. As to quaternary structure, homodimer.

The protein resides in the cytoplasm. It catalyses the reaction D-glyceraldehyde 3-phosphate = dihydroxyacetone phosphate. Its pathway is carbohydrate biosynthesis; gluconeogenesis. It participates in carbohydrate degradation; glycolysis; D-glyceraldehyde 3-phosphate from glycerone phosphate: step 1/1. Its function is as follows. Involved in the gluconeogenesis. Catalyzes stereospecifically the conversion of dihydroxyacetone phosphate (DHAP) to D-glyceraldehyde-3-phosphate (G3P). The chain is Triosephosphate isomerase from Borrelia recurrentis (strain A1).